We begin with the raw amino-acid sequence, 329 residues long: GTPase Obg (329 aa).

The 159-residue stretch at 1–159 (MQFIDQAIID…WSLQLELKLL (159 aa)) folds into the Obg domain. Residues 160–328 (AEVGIIGLPN…LLSSIWYELG (169 aa)) form the OBG-type G domain. ATP-binding positions include 166–173 (GLPNAGKS), 191–195 (FTTLI), 213–216 (DIPG), 280–283 (NKKE), and 309–311 (SAV). 2 residues coordinate Mg(2+): Ser173 and Thr193.

The protein belongs to the TRAFAC class OBG-HflX-like GTPase superfamily. OBG GTPase family. Monomer. The cofactor is Mg(2+).

It localises to the cytoplasm. In terms of biological role, an essential GTPase which binds GTP, GDP and possibly (p)ppGpp with moderate affinity, with high nucleotide exchange rates and a fairly low GTP hydrolysis rate. Plays a role in control of the cell cycle, stress response, ribosome biogenesis and in those bacteria that undergo differentiation, in morphogenesis control. This Prochlorococcus marinus (strain NATL1A) protein is GTPase Obg.